Here is an 84-residue protein sequence, read N- to C-terminus: Beta-defensin 119 (84 aa).

The N-terminal stretch at 1–21 (MKLLYLFLAILLAIEEPVISG) is a signal peptide. 3 disulfide bridges follow: cysteine 28-cysteine 55, cysteine 35-cysteine 49, and cysteine 39-cysteine 56.

Belongs to the beta-defensin family.

It localises to the secreted. Its function is as follows. Has antibacterial activity. This chain is Beta-defensin 119 (DEFB119), found in Hylobates lar (Lar gibbon).